Reading from the N-terminus, the 194-residue chain is Adenylate kinase (194 aa).

12–17 lines the ATP pocket; the sequence is GSGKTT. The segment at 34-63 is NMP; sequence STGDLLREEVKKGTPLGATIASFIDNGQLV. AMP-binding positions include Thr-35, Arg-40, 61–63, 88–91, and Gln-95; these read QLV and GFPR. Residues 130–136 are LID; sequence GRARGAD. Residue Arg-131 participates in ATP binding. AMP contacts are provided by Arg-133 and Arg-145. Arg-173 contributes to the ATP binding site.

This sequence belongs to the adenylate kinase family. In terms of assembly, monomer.

The protein localises to the cytoplasm. The enzyme catalyses AMP + ATP = 2 ADP. It participates in purine metabolism; AMP biosynthesis via salvage pathway; AMP from ADP: step 1/1. Functionally, catalyzes the reversible transfer of the terminal phosphate group between ATP and AMP. Plays an important role in cellular energy homeostasis and in adenine nucleotide metabolism. This Nitratiruptor sp. (strain SB155-2) protein is Adenylate kinase.